A 181-amino-acid chain; its full sequence is Large ribosomal subunit protein uL5c (181 aa).

This sequence belongs to the universal ribosomal protein uL5 family. Part of the 50S ribosomal subunit; contacts the 5S rRNA.

It localises to the plastid. Its subcellular location is the chloroplast. In terms of biological role, binds 5S rRNA, forms part of the central protuberance of the 50S subunit. The polypeptide is Large ribosomal subunit protein uL5c (rpl5) (Pyropia yezoensis (Susabi-nori)).